Here is a 109-residue protein sequence, read N- to C-terminus: uncharacterized protein (109 aa).

The chain crosses the membrane as a helical span at residues 75 to 95 (MALFHTVFILWPHFCGILWTV).

The protein localises to the membrane. This is an uncharacterized protein from Saccharomyces cerevisiae (strain ATCC 204508 / S288c) (Baker's yeast).